The primary structure comprises 137 residues: Large ribosomal subunit protein uL16 (137 aa).

It belongs to the universal ribosomal protein uL16 family. Part of the 50S ribosomal subunit.

Its function is as follows. Binds 23S rRNA and is also seen to make contacts with the A and possibly P site tRNAs. This is Large ribosomal subunit protein uL16 from Cereibacter sphaeroides (strain ATCC 17029 / ATH 2.4.9) (Rhodobacter sphaeroides).